Consider the following 291-residue polypeptide: ATP synthase gamma chain (291 aa).

This sequence belongs to the ATPase gamma chain family. In terms of assembly, F-type ATPases have 2 components, CF(1) - the catalytic core - and CF(0) - the membrane proton channel. CF(1) has five subunits: alpha(3), beta(3), gamma(1), delta(1), epsilon(1). CF(0) has three main subunits: a, b and c.

The protein localises to the cell inner membrane. In terms of biological role, produces ATP from ADP in the presence of a proton gradient across the membrane. The gamma chain is believed to be important in regulating ATPase activity and the flow of protons through the CF(0) complex. This chain is ATP synthase gamma chain, found in Burkholderia multivorans (strain ATCC 17616 / 249).